The primary structure comprises 232 residues: Purine nucleoside phosphorylase DeoD-type (232 aa).

Histidine 4 serves as a coordination point for a purine D-ribonucleoside. Phosphate is bound by residues glycine 20, arginine 24, arginine 43, and 87-90 (RVGS). A purine D-ribonucleoside is bound by residues glutamate 162, 178-180 (EME), and 202-203 (SD). Residue aspartate 203 is the Proton donor of the active site.

Belongs to the PNP/UDP phosphorylase family. As to quaternary structure, homohexamer; trimer of homodimers.

It catalyses the reaction a purine D-ribonucleoside + phosphate = a purine nucleobase + alpha-D-ribose 1-phosphate. The enzyme catalyses a purine 2'-deoxy-D-ribonucleoside + phosphate = a purine nucleobase + 2-deoxy-alpha-D-ribose 1-phosphate. Its function is as follows. Catalyzes the reversible phosphorolytic breakdown of the N-glycosidic bond in the beta-(deoxy)ribonucleoside molecules, with the formation of the corresponding free purine bases and pentose-1-phosphate. The chain is Purine nucleoside phosphorylase DeoD-type from Bacillus velezensis (strain DSM 23117 / BGSC 10A6 / LMG 26770 / FZB42) (Bacillus amyloliquefaciens subsp. plantarum).